Here is a 343-residue protein sequence, read N- to C-terminus: GTPase Obg (343 aa).

The Obg domain maps to 1–159 (MKFIDEVKIQ…FELRLELRVL (159 aa)). Residues 160–334 (ADVGLLGLPN…LIYAIMGHLQ (175 aa)) form the OBG-type G domain. Residues 166-173 (GLPNAGKS), 191-195 (FTTLY), 213-216 (DIPG), 284-287 (NKVD), and 315-317 (SAL) contribute to the GTP site. Mg(2+) contacts are provided by S173 and T193.

The protein belongs to the TRAFAC class OBG-HflX-like GTPase superfamily. OBG GTPase family. In terms of assembly, monomer. Requires Mg(2+) as cofactor.

Its subcellular location is the cytoplasm. Its function is as follows. An essential GTPase which binds GTP, GDP and possibly (p)ppGpp with moderate affinity, with high nucleotide exchange rates and a fairly low GTP hydrolysis rate. Plays a role in control of the cell cycle, stress response, ribosome biogenesis and in those bacteria that undergo differentiation, in morphogenesis control. This is GTPase Obg from Nitrosomonas europaea (strain ATCC 19718 / CIP 103999 / KCTC 2705 / NBRC 14298).